The chain runs to 145 residues: Basic phospholipase A2 beta-bungarotoxin A-AL1 chain (145 aa).

Positions 1 to 17 are cleaved as a signal peptide; sequence MLIFLWCGAVCVSLLGA. Residues 18-25 constitute a propeptide that is removed on maturation; it reads ANIPPHPL. 5 cysteine pairs are disulfide-bonded: cysteine 52/cysteine 144, cysteine 54/cysteine 70, cysteine 76/cysteine 118, cysteine 86/cysteine 111, and cysteine 104/cysteine 116. Residues tyrosine 53, glycine 55, and glycine 57 each contribute to the Ca(2+) site. Histidine 73 is a catalytic residue. Aspartate 119 is an active-site residue.

Belongs to the phospholipase A2 family. Group I subfamily. G49 sub-subfamily. As to quaternary structure, heterodimer; disulfide-linked. The A chains have phospholipase A2 activity and the B chains show homology with the basic protease inhibitors. It depends on Ca(2+) as a cofactor. In terms of processing, this enzyme lacks one of the seven disulfide bonds found in similar PLA2 proteins. In terms of tissue distribution, expressed by the venom gland.

The protein resides in the secreted. It carries out the reaction a 1,2-diacyl-sn-glycero-3-phosphocholine + H2O = a 1-acyl-sn-glycero-3-phosphocholine + a fatty acid + H(+). Snake venom phospholipase A2 (PLA2) that inhibits neuromuscular transmission by blocking acetylcholine release from the nerve termini. PLA2 catalyzes the calcium-dependent hydrolysis of the 2-acyl groups in 3-sn-phosphoglycerides. The sequence is that of Basic phospholipase A2 beta-bungarotoxin A-AL1 chain from Bungarus multicinctus (Many-banded krait).